A 288-amino-acid polypeptide reads, in one-letter code: Protease HtpX (288 aa).

2 consecutive transmembrane segments (helical) span residues 5–25 and 35–55; these read IALF…VMSL and GLLV…LLLS. Residue H140 coordinates Zn(2+). E141 is an active-site residue. H144 is a binding site for Zn(2+). Transmembrane regions (helical) follow at residues 155-175 and 194-214; these read LLQG…GGII and IIVF…SMWF. E219 is a Zn(2+) binding site.

This sequence belongs to the peptidase M48B family. The cofactor is Zn(2+).

The protein localises to the cell inner membrane. The sequence is that of Protease HtpX from Stenotrophomonas maltophilia (strain K279a).